Consider the following 418-residue polypeptide: Phosphoglycerate kinase (418 aa).

(2R)-3-phosphoglycerate-binding residues include Val24, Asp25, Phe26, Asn27, Arg40, Ser63, His64, Gly66, Arg67, Leu122, Arg123, His169, and Arg170. Gly213 serves as a coordination point for ADP. A CDP-binding site is contributed by Gly213. AMP contacts are provided by Ala214 and Lys215. Ala214 is a binding site for ATP. Ala214 provides a ligand contact to Mg(2+). Ala217 and Asp218 together coordinate Mg(2+). Position 218 (Asp218) interacts with CDP. Lys219 contacts AMP. Lys219 provides a ligand contact to ATP. Residue Gly237 participates in ADP binding. Gly237 serves as a coordination point for CDP. Gly238 and Gly312 together coordinate AMP. The ATP site is built by Gly238 and Gly312. Gly337 and Phe342 together coordinate CDP. Residue Phe342 participates in ADP binding. AMP is bound at residue Glu343. Residues Glu343, Asp374, and Thr375 each coordinate ATP. Asp374 lines the Mg(2+) pocket.

The protein belongs to the phosphoglycerate kinase family. In terms of assembly, monomer. Mg(2+) is required as a cofactor.

It catalyses the reaction (2R)-3-phosphoglycerate + ATP = (2R)-3-phospho-glyceroyl phosphate + ADP. The protein operates within carbohydrate degradation; glycolysis; pyruvate from D-glyceraldehyde 3-phosphate: step 2/5. This chain is Phosphoglycerate kinase (PGK), found in Euplotes crassus.